Here is a 212-residue protein sequence, read N- to C-terminus: LexA repressor (212 aa).

Positions 26–46 (VREIGEAVGLSSTSTVHGHID) form a DNA-binding region, H-T-H motif. Residues serine 128 and lysine 171 each act as for autocatalytic cleavage activity in the active site.

Belongs to the peptidase S24 family. As to quaternary structure, homodimer.

The catalysed reaction is Hydrolysis of Ala-|-Gly bond in repressor LexA.. Its function is as follows. Represses a number of genes involved in the response to DNA damage (SOS response), including recA and lexA. In the presence of single-stranded DNA, RecA interacts with LexA causing an autocatalytic cleavage which disrupts the DNA-binding part of LexA, leading to derepression of the SOS regulon and eventually DNA repair. This chain is LexA repressor, found in Oenococcus oeni (strain ATCC BAA-331 / PSU-1).